The primary structure comprises 175 residues: Shikimate kinase (175 aa).

Residue 14 to 19 (GAGKST) participates in ATP binding. Ser-18 is a Mg(2+) binding site. Substrate-binding residues include Asp-36, Arg-60, and Gly-82. Arg-120 contributes to the ATP binding site. Arg-140 contributes to the substrate binding site. Residue Gln-157 participates in ATP binding.

This sequence belongs to the shikimate kinase family. As to quaternary structure, monomer. It depends on Mg(2+) as a cofactor.

It localises to the cytoplasm. The enzyme catalyses shikimate + ATP = 3-phosphoshikimate + ADP + H(+). The protein operates within metabolic intermediate biosynthesis; chorismate biosynthesis; chorismate from D-erythrose 4-phosphate and phosphoenolpyruvate: step 5/7. Its function is as follows. Catalyzes the specific phosphorylation of the 3-hydroxyl group of shikimic acid using ATP as a cosubstrate. In Pasteurella multocida (strain Pm70), this protein is Shikimate kinase.